Reading from the N-terminus, the 241-residue chain is Probable 2-phosphosulfolactate phosphatase (241 aa).

Belongs to the ComB family. The cofactor is Mg(2+).

The enzyme catalyses (2R)-O-phospho-3-sulfolactate + H2O = (2R)-3-sulfolactate + phosphate. The protein is Probable 2-phosphosulfolactate phosphatase of Microcystis aeruginosa (strain NIES-843 / IAM M-2473).